Here is a 253-residue protein sequence, read N- to C-terminus: uncharacterized protein (253 aa).

Position 10–35 (10–35 (ISGAASKRGIGRATAELFASHGARVA)) interacts with NADP(+). Position 144 (Ser-144) interacts with substrate. Catalysis depends on Tyr-159, which acts as the Proton acceptor.

It belongs to the short-chain dehydrogenases/reductases (SDR) family.

This is an uncharacterized protein from Sinorhizobium fredii (strain NBRC 101917 / NGR234).